The chain runs to 318 residues: Magnetosome protein MamM (318 aa).

Residues 1 to 210 (MRKSGCTVCS…FMDAYRGLMD (210 aa)) form a transmembrane domain (TMD) region. The next 4 helical transmembrane spans lie at 13 to 33 (IGWVGLAVNTVLMVMKAFVGL), 39 to 59 (AMLADAMYSLKDMLNALMVVI), 81 to 101 (FILSMVVSVVFIGLTGYLLVH), and 117 to 137 (LIVLWAALVSVGVNVAMYFYS). A C-terminal domain (CTD) region spans residues 211–318 (HTAGEAVQNR…DEVMLSKVDN (108 aa)). 4 residues coordinate Fe cation: Asp-249, His-264, His-285, and Glu-289.

Belongs to the cation diffusion facilitator (CDF) transporter (TC 2.A.4) family. Forms homodimers via its C-terminal domain (CTD) in the presence of metal cations. Interacts with MamB via their CTD.

Its subcellular location is the magnetosome membrane. The protein resides in the cell inner membrane. In terms of biological role, probably plays a role in biomineralization. Required for stable accumulation of MamB. Probably binds and transports iron. May nucleate iron crystal formation. The protein is Magnetosome protein MamM (mamM) of Paramagnetospirillum magneticum (strain ATCC 700264 / AMB-1) (Magnetospirillum magneticum).